The following is a 187-amino-acid chain: Flavin prenyltransferase LpdB (187 aa).

Residues 10–12 (GAS), S37, 88–91 (SMKT), and R123 each bind FMN. Residues Y153 and K169 each coordinate dimethylallyl phosphate.

The protein belongs to the UbiX/PAD1 family.

It catalyses the reaction dimethylallyl phosphate + FMNH2 = prenylated FMNH2 + phosphate. Its function is as follows. Involved in tannin degradation. Flavin prenyltransferase that catalyzes the synthesis of the prenylated FMN cofactor (prenyl-FMN) for gallate decarboxylase LpdC. The prenyltransferase is metal-independent and links a dimethylallyl moiety from dimethylallyl monophosphate (DMAP) to the flavin N5 and C6 atoms of FMN. In Lactiplantibacillus plantarum (strain ATCC BAA-793 / NCIMB 8826 / WCFS1) (Lactobacillus plantarum), this protein is Flavin prenyltransferase LpdB.